The following is a 222-amino-acid chain: Germin-like protein subfamily 1 member 5 (222 aa).

An N-terminal signal peptide occupies residues 1–24 (MKGLLHFLLAKIILLALASSFVYC). Cysteines 34 and 50 form a disulfide. N-linked (GlcNAc...) asparagine glycosylation is found at asparagine 38 and asparagine 71. A Cupin type-1 domain is found at 64–215 (SGLNVPGNTS…AFALDFNKVK (152 aa)). Residues histidine 112, histidine 114, and glutamate 119 each contribute to the Mn(2+) site. N-linked (GlcNAc...) asparagine glycosylation occurs at asparagine 139. Position 163 (histidine 163) interacts with Mn(2+).

It belongs to the germin family. In terms of assembly, oligomer (believed to be a pentamer but probably hexamer).

It localises to the secreted. It is found in the extracellular space. The protein resides in the apoplast. Its function is as follows. May play a role in plant defense. Probably has no oxalate oxidase activity even if the active site is conserved. The chain is Germin-like protein subfamily 1 member 5 from Arabidopsis thaliana (Mouse-ear cress).